Here is a 128-residue protein sequence, read N- to C-terminus: Protein SOB FIVE-LIKE 3 (128 aa).

Disordered stretches follow at residues 1–26 (MERE…EEEE) and 54–128 (KDSD…HKKK). Residues 8-18 (SSESGWTTYIS) are compositionally biased toward polar residues. Residues 11-16 (SGWTTY) carry the SOFL-A motif. An SOFL-B motif is present at residues 59–68 (SMASDASSGP). Positions 80–104 (REGLALRNGKGESNDVYSHRIDDKN) are enriched in basic and acidic residues. The Nuclear localization signal signature appears at 111-118 (RKKEKKKS).

This sequence belongs to the SOFL plant protein family. Expressed in seedlings, roots, flowers and siliques.

The protein localises to the cytoplasm. The protein resides in the nucleus. Functionally, involved in cytokinin-mediated development. This is Protein SOB FIVE-LIKE 3 from Arabidopsis thaliana (Mouse-ear cress).